Reading from the N-terminus, the 304-residue chain is Aspartate carbamoyltransferase catalytic subunit (304 aa).

Residues R57 and T58 each coordinate carbamoyl phosphate. K85 contributes to the L-aspartate binding site. Residues R107, H134, and Q137 each contribute to the carbamoyl phosphate site. The L-aspartate site is built by R167 and R216. The carbamoyl phosphate site is built by A260 and P261.

The protein belongs to the aspartate/ornithine carbamoyltransferase superfamily. ATCase family. As to quaternary structure, heterododecamer (2C3:3R2) of six catalytic PyrB chains organized as two trimers (C3), and six regulatory PyrI chains organized as three dimers (R2).

The catalysed reaction is carbamoyl phosphate + L-aspartate = N-carbamoyl-L-aspartate + phosphate + H(+). It participates in pyrimidine metabolism; UMP biosynthesis via de novo pathway; (S)-dihydroorotate from bicarbonate: step 2/3. Its function is as follows. Catalyzes the condensation of carbamoyl phosphate and aspartate to form carbamoyl aspartate and inorganic phosphate, the committed step in the de novo pyrimidine nucleotide biosynthesis pathway. This chain is Aspartate carbamoyltransferase catalytic subunit, found in Fusobacterium nucleatum subsp. nucleatum (strain ATCC 25586 / DSM 15643 / BCRC 10681 / CIP 101130 / JCM 8532 / KCTC 2640 / LMG 13131 / VPI 4355).